Here is a 1079-residue protein sequence, read N- to C-terminus: MGKKGKKSGYADWEDDLGEDISGQNEYLDNTSQDSPQNDELAEKSENLAVSSEKTTSKKKKGKKNKGNKNQVSDDESQELESPQGPKELTAVTELDDDEFDYKPKKGKKGKKSKKVEEDDEPQEIESPQGPKELTAVTELDDDEFDYKPKKGKKGKKAQNNNESEAAAPPEIPEVRVKTKKEKEREKKEREKLRKKQQQAKKKGSTGEDTLASSEVSSEVDISTPAENDSSAKGKQAAGSKRKGPNVTALQKMLEEKRAREEEEQRIREEEARIAEEEKRLAEVEEARKEEARLKKKEKERKKKEEMKAQGKYLSKKQKEQQALAQRRLQQMLESGVRVAGLSNGEKKQKPVYTNKKKSNRSGTSSISSSGILESSPATSISVDEPQKDSKDDSEKVEKETEVERKEENEAEAEAVFDDWEAALEEPEVAENNEVVTEKKETDIKSDAVEHSIKDKEDSKTDKVDDIPQAAPAESNVSESDLRSPICCILGHVDTGKTKLLDNLRRSNVQEGEAGGITQQIGATYFPIESIKQKTKVVNKKGKLQYNIPGLLIIDTPGHESFTNLRSRGTSLCNIAILVIDIMHGLEPQTIESIRLLRDQKTPFVVALNKVDRLYGWHSIKDNAIQDSLSKQKKAIQREFRDRVESIILQLNEQGLNAALYFENKNLGRYVSLVPTSAQSGEGVPDLVALLISLTQTRMSDRIKYITTLECTVLEVKVIEGLGATIDVILSNGVLHEGDRIVLCGMGGPIITTVRALLTPQPLKEMRVKSAYVHHKEIKAAMGVKICANDLEKAVAGSRLLVVGPDDDEEDLAEEIMEDLENLLGRIDTSGIGVSVQASTLGSLEALLEFLKQMKIPVASVNIGPVYKKDVMRCATMLEKAKEYALMLCFDVKVDRDAEDLAEQLGVKIFSANVIYHLFDAFTAHQKKILEQKREESSDVAVFPCVLKTVAAFNKRDPIILGVDVVEGVLRINTPIVAVKQLPNGEPQIIELGRVASLEMNHKPVDKVKKGQAGAGVAMKLESSGSQILFGRQVTESDALYSHITRQSIDSLKDPAFRDEVSRDEWQLIIQLKKLFGII.

Residues 1–478 are disordered; it reads MGKKGKKSGY…QAAPAESNVS (478 aa). Residues 22-38 show a composition bias toward polar residues; that stretch reads SGQNEYLDNTSQDSPQN. A compositionally biased stretch (basic residues) spans 57-67; the sequence is SKKKKGKKNKG. Residues S73, S77, and S82 each carry the phosphoserine modification. A compositionally biased stretch (basic residues) spans 105–114; the sequence is KKGKKGKKSK. At S127 the chain carries Phosphoserine. Residues 160–169 show a composition bias toward low complexity; it reads NNNESEAAAP. The segment covering 173–192 has biased composition (basic and acidic residues); sequence PEVRVKTKKEKEREKKEREK. Residues 193 to 204 show a composition bias toward basic residues; the sequence is LRKKQQQAKKKG. Residues 207–233 are compositionally biased toward polar residues; that stretch reads GEDTLASSEVSSEVDISTPAENDSSAK. Residues 253–293 show a composition bias toward basic and acidic residues; sequence MLEEKRAREEEEQRIREEEARIAEEEKRLAEVEEARKEEAR. Low complexity-rich tracts occupy residues 321–334 and 361–376; these read QQALAQRRLQQMLE and RSGTSSISSSGILESS. T364 carries the phosphothreonine modification. A compositionally biased stretch (basic and acidic residues) spans 385–408; it reads EPQKDSKDDSEKVEKETEVERKEE. Residues 409 to 431 show a composition bias toward acidic residues; sequence NEAEAEAVFDDWEAALEEPEVAE. The span at 436–466 shows a compositional bias: basic and acidic residues; it reads VTEKKETDIKSDAVEHSIKDKEDSKTDKVDD. Positions 482–700 constitute a tr-type G domain; the sequence is LRSPICCILG…LISLTQTRMS (219 aa). Positions 491–498 are G1; that stretch reads GHVDTGKT. GTP is bound at residue 491–498; the sequence is GHVDTGKT. The interval 516–520 is G2; that stretch reads GITQQ. The interval 555 to 558 is G3; that stretch reads DTPG. Positions 609–612 are G4; sequence NKVD. Positions 677–679 are G5; sequence SAQ.

Belongs to the TRAFAC class translation factor GTPase superfamily. Classic translation factor GTPase family. IF-2 subfamily. A monovalent cation is required as a cofactor.

It is found in the cytoplasm. It carries out the reaction GTP + H2O = GDP + phosphate + H(+). In terms of biological role, plays a role in translation initiation. Translational GTPase that catalyzes the joining of the 40S and 60S subunits to form the 80S initiation complex with the initiator methionine-tRNA in the P-site base paired to the start codon. GTP binding and hydrolysis induces conformational changes in the enzyme that renders it active for productive interactions with the ribosome. The release of the enzyme after formation of the initiation complex is a prerequisite to form elongation-competent ribosomes. The protein is Eukaryotic translation initiation factor 5B of Schizosaccharomyces pombe (strain 972 / ATCC 24843) (Fission yeast).